A 597-amino-acid polypeptide reads, in one-letter code: DNA polymerase III subunit gamma/tau (597 aa).

ATP is bound at residue glycine 44–threonine 51. Residues cysteine 63, cysteine 72, cysteine 75, and cysteine 78 each coordinate Zn(2+).

This sequence belongs to the DnaX/STICHEL family. In terms of assembly, DNA polymerase III contains a core (composed of alpha, epsilon and theta chains) that associates with a tau subunit. This core dimerizes to form the POLIII' complex. PolIII' associates with the gamma complex (composed of gamma, delta, delta', psi and chi chains) and with the beta chain to form the complete DNA polymerase III complex.

It carries out the reaction DNA(n) + a 2'-deoxyribonucleoside 5'-triphosphate = DNA(n+1) + diphosphate. In terms of biological role, DNA polymerase III is a complex, multichain enzyme responsible for most of the replicative synthesis in bacteria. This DNA polymerase also exhibits 3' to 5' exonuclease activity. The protein is DNA polymerase III subunit gamma/tau (dnaX) of Mycoplasma genitalium (strain ATCC 33530 / DSM 19775 / NCTC 10195 / G37) (Mycoplasmoides genitalium).